The primary structure comprises 2185 residues: Genome polyprotein (2185 aa).

G2 carries the N-myristoyl glycine; by host lipid modification. Residues 2–1495 (GAQVSTQKTG…HVNRAFICLQ (1494 aa)) are Cytoplasmic-facing. The tract at residues 566 to 582 (FFQGPPGEVVERAIARV) is amphipathic alpha-helix. Active-site for protease 2A activity residues include H872 and D890. Residues C907 and C909 each contribute to the Zn(2+) site. The For protease 2A activity role is filled by C961. Positions 967 and 969 each coordinate Zn(2+). Residues 1101–1173 (NSGWLKKFTE…EQSAPSQSDQ (73 aa)) form a membrane-binding region. The tract at residues 1101 to 1239 (NSGWLKKFTE…SPGAGKSVAT (139 aa)) is oligomerization. An RNA-binding region spans residues 1122–1126 (AIKIQ). Positions 1205 to 1361 (EKKMSNYIQF…SMYSQNGKIN (157 aa)) constitute an SF3 helicase domain. Zn(2+) contacts are provided by C1369, C1381, and C1386. A C4-type; degenerate zinc finger spans residues 1369–1386 (CDEECCPVNFKKCCPLVC). Residues 1413 to 1420 (EYNHRHSV) form an RNA-binding region. The oligomerization stretch occupies residues 1424-1429 (LEALFQ). The stretch at 1496–1511 (ALTTFVSVAGIIYIIY) is an intramembrane region. Topologically, residues 1512-2185 (KLFAGFQGAY…TLRRKWLDSF (674 aa)) are cytoplasmic. At Y1521 the chain carries O-(5'-phospho-RNA)-tyrosine. One can recognise a Peptidase C3 domain in the interval 1541–1719 (GPAFEFAVAM…FSAALLRHYF (179 aa)). Residues H1580, E1611, and C1687 each act as for protease 3C activity in the active site. One can recognise a RdRp catalytic domain in the interval 1950–2066 (GHLIAFDYSG…SYPWPIDASL (117 aa)). 2 residues coordinate Mg(2+): D1956 and D2052.

This sequence belongs to the picornaviruses polyprotein family. In terms of assembly, interacts with capsid protein VP1 and capsid protein VP3 to form heterotrimeric protomers. As to quaternary structure, interacts with capsid protein VP0, and capsid protein VP3 to form heterotrimeric protomers. Five protomers subsequently associate to form pentamers which serve as building blocks for the capsid. Interacts with capsid protein VP2, capsid protein VP3 and capsid protein VP4 following cleavage of capsid protein VP0. Interacts with capsid protein VP1 and capsid protein VP3 in the mature capsid. In terms of assembly, interacts with capsid protein VP0 and capsid protein VP1 to form heterotrimeric protomers. Five protomers subsequently associate to form pentamers which serve as building blocks for the capsid. Interacts with capsid protein VP4 in the mature capsid. Interacts with protein 2C; this interaction may be important for virion morphogenesis. As to quaternary structure, interacts with capsid protein VP1 and capsid protein VP3. Homodimer. In terms of assembly, homohexamer; forms a hexameric ring structure with 6-fold symmetry characteristic of AAA+ ATPases. Interacts (via N-terminus) with host RTN3 (via reticulon domain); this interaction is important for viral replication. Interacts with capsid protein VP3; this interaction may be important for virion morphogenesis. As to quaternary structure, interacts with protein 3CD. Homodimer. Interacts with host GBF1. Interacts (via GOLD domain) with host ACBD3 (via GOLD domain); this interaction allows the formation of a viral protein 3A/ACBD3 heterotetramer with a 2:2 stoichiometry, which will stimulate the recruitment of host PI4KB in order to synthesize PI4P at the viral RNA replication sites. In terms of assembly, interacts with RNA-directed RNA polymerase. As to quaternary structure, interacts with protein 3AB and with RNA-directed RNA polymerase. Interacts with Viral protein genome-linked and with protein 3CD. It depends on Mg(2+) as a cofactor. Specific enzymatic cleavages in vivo by the viral proteases yield processing intermediates and the mature proteins. In terms of processing, myristoylation is required for the formation of pentamers during virus assembly. Further assembly of 12 pentamers and a molecule of genomic RNA generates the provirion. Post-translationally, during virion maturation, immature virions are rendered infectious following cleavage of VP0 into VP4 and VP2. This maturation seems to be an autocatalytic event triggered by the presence of RNA in the capsid and it is followed by a conformational change infectious virion. Myristoylation is required during RNA encapsidation and formation of the mature virus particle. In terms of processing, VPg is uridylylated by the polymerase into VPg-pUpU. This acts as a nucleotide-peptide primer for the genomic RNA replication.

The protein localises to the virion. The protein resides in the host cytoplasm. Its subcellular location is the host cytoplasmic vesicle membrane. It is found in the host nucleus. It carries out the reaction a ribonucleoside 5'-triphosphate + H2O = a ribonucleoside 5'-diphosphate + phosphate + H(+). The enzyme catalyses Selective cleavage of Tyr-|-Gly bond in the picornavirus polyprotein.. It catalyses the reaction RNA(n) + a ribonucleoside 5'-triphosphate = RNA(n+1) + diphosphate. The catalysed reaction is Selective cleavage of Gln-|-Gly bond in the poliovirus polyprotein. In other picornavirus reactions Glu may be substituted for Gln, and Ser or Thr for Gly.. With respect to regulation, replication or transcription is subject to high level of random mutations by the nucleotide analog ribavirin. In terms of biological role, forms an icosahedral capsid of pseudo T=3 symmetry with capsid proteins VP2 and VP3. The capsid is 300 Angstroms in diameter, composed of 60 copies of each capsid protein and enclosing the viral positive strand RNA genome. Capsid protein VP1 mainly forms the vertices of the capsid. Capsid protein VP1 interacts with host cell receptor to provide virion attachment to target host cells. This attachment induces virion internalization. Tyrosine kinases are probably involved in the entry process. After binding to its receptor, the capsid undergoes conformational changes. Capsid protein VP1 N-terminus (that contains an amphipathic alpha-helix) and capsid protein VP4 are externalized. Together, they shape a pore in the host membrane through which viral genome is translocated to host cell cytoplasm. Functionally, forms an icosahedral capsid of pseudo T=3 symmetry with capsid proteins VP2 and VP3. The capsid is 300 Angstroms in diameter, composed of 60 copies of each capsid protein and enclosing the viral positive strand RNA genome. Its function is as follows. Lies on the inner surface of the capsid shell. After binding to the host receptor, the capsid undergoes conformational changes. Capsid protein VP4 is released, Capsid protein VP1 N-terminus is externalized, and together, they shape a pore in the host membrane through which the viral genome is translocated into the host cell cytoplasm. Component of immature procapsids, which is cleaved into capsid proteins VP4 and VP2 after maturation. Allows the capsid to remain inactive before the maturation step. In terms of biological role, cysteine protease that cleaves viral polyprotein and specific host proteins. It is responsible for the autocatalytic cleavage between the P1 and P2 regions, which is the first cleavage occurring in the polyprotein. Also cleaves the host translation initiation factor EIF4G1, in order to shut down the capped cellular mRNA translation. Inhibits the host nucleus-cytoplasm protein and RNA trafficking by cleaving host members of the nuclear pores. Counteracts stress granule formation probably by antagonizing its assembly or promoting its dissassembly. Functionally, plays an essential role in the virus replication cycle by acting as a viroporin. Creates a pore in the host endoplasmic reticulum and as a consequence releases Ca2+ in the cytoplasm of infected cell. In turn, high levels of cytoplasmic calcium may trigger membrane trafficking and transport of viral ER-associated proteins to viroplasms, sites of viral genome replication. Its function is as follows. Induces and associates with structural rearrangements of intracellular membranes. Displays RNA-binding, nucleotide binding and NTPase activities. May play a role in virion morphogenesis and viral RNA encapsidation by interacting with the capsid protein VP3. Localizes the viral replication complex to the surface of membranous vesicles. Together with protein 3CD binds the Cis-Active RNA Element (CRE) which is involved in RNA synthesis initiation. Acts as a cofactor to stimulate the activity of 3D polymerase, maybe through a nucleid acid chaperone activity. In terms of biological role, localizes the viral replication complex to the surface of membranous vesicles. It inhibits host cell endoplasmic reticulum-to-Golgi apparatus transport and causes the disassembly of the Golgi complex, possibly through GBF1 interaction. This would result in depletion of MHC, trail receptors and IFN receptors at the host cell surface. Plays an essential role in viral RNA replication by recruiting ACBD3 and PI4KB at the viral replication sites, thereby allowing the formation of the rearranged membranous structures where viral replication takes place. Functionally, acts as a primer for viral RNA replication and remains covalently bound to viral genomic RNA. VPg is uridylylated prior to priming replication into VPg-pUpU. The oriI viral genomic sequence may act as a template for this. The VPg-pUpU is then used as primer on the genomic RNA poly(A) by the RNA-dependent RNA polymerase to replicate the viral genome. During genome replication, the VPg-RNA linkage is removed by the host TDP2, thereby accelerating replication. During the late stage of the replication cycle, host TDP2 is excluded from sites of viral RNA synthesis and encapsidation, allowing for the generation of progeny virions. Its function is as follows. Involved in the viral replication complex and viral polypeptide maturation. It exhibits protease activity with a specificity and catalytic efficiency that is different from protease 3C. Protein 3CD lacks polymerase activity. Protein 3CD binds to the 5'UTR of the viral genome. Major viral protease that mediates proteolytic processing of the polyprotein. Cleaves host EIF5B, contributing to host translation shutoff. Also cleaves host PABPC1, contributing to host translation shutoff. Cleaves host NLRP1, triggers host N-glycine-mediated degradation of the autoinhibitory NLRP1 N-terminal fragment. In terms of biological role, replicates the viral genomic RNA on the surface of intracellular membranes. May form linear arrays of subunits that propagate along a strong head-to-tail interaction called interface-I. Covalently attaches UMP to a tyrosine of VPg, which is used to prime RNA synthesis. The positive stranded RNA genome is first replicated at virus induced membranous vesicles, creating a dsRNA genomic replication form. This dsRNA is then used as template to synthesize positive stranded RNA genomes. ss(+)RNA genomes are either translated, replicated or encapsidated. In Swine vesicular disease virus (strain H/3 '76) (SVDV), this protein is Genome polyprotein.